A 247-amino-acid polypeptide reads, in one-letter code: ATP synthase subunit a, chloroplastic (247 aa).

A run of 5 helical transmembrane segments spans residues 38-58 (QVLI…IIAV), 95-115 (VPFI…GALL), 134-154 (INTT…AGLS), 199-219 (LVVV…VMFL), and 220-240 (GLFT…AYIG).

The protein belongs to the ATPase A chain family. F-type ATPases have 2 components, CF(1) - the catalytic core - and CF(0) - the membrane proton channel. CF(1) has five subunits: alpha(3), beta(3), gamma(1), delta(1), epsilon(1). CF(0) has four main subunits: a, b, b' and c.

Its subcellular location is the plastid. It is found in the chloroplast thylakoid membrane. In terms of biological role, key component of the proton channel; it plays a direct role in the translocation of protons across the membrane. The sequence is that of ATP synthase subunit a, chloroplastic from Zea mays (Maize).